We begin with the raw amino-acid sequence, 255 residues long: uncharacterized protein (255 aa).

The a divalent metal cation site is built by His6, His8, Glu92, His128, His153, and Asp203.

This sequence belongs to the metallo-dependent hydrolases superfamily. TatD-type hydrolase family. Requires a divalent metal cation as cofactor.

This is an uncharacterized protein from Bacillus subtilis (strain 168).